A 388-amino-acid polypeptide reads, in one-letter code: Na(+)/H(+) antiporter NhaA (388 aa).

11 consecutive transmembrane segments (helical) span residues 14 to 34 (GGII…MGAT), 59 to 79 (MLLW…GLEV), 95 to 115 (AFPV…YLAF), 125 to 145 (GWAI…ALLG), 154 to 174 (IFLM…IALF), 179 to 199 (LSIV…LLNL), 219 to 239 (VLKS…FIPL), 254 to 274 (VLHP…NAGV), 292 to 312 (IIAG…WLAL), 328 to 348 (IMAV…IASL), and 360 to 380 (WAKL…YSWL).

Belongs to the NhaA Na(+)/H(+) (TC 2.A.33) antiporter family.

It is found in the cell inner membrane. It catalyses the reaction Na(+)(in) + 2 H(+)(out) = Na(+)(out) + 2 H(+)(in). Na(+)/H(+) antiporter that extrudes sodium in exchange for external protons. The protein is Na(+)/H(+) antiporter NhaA of Salmonella choleraesuis (strain SC-B67).